We begin with the raw amino-acid sequence, 153 residues long: Endoribonuclease YbeY (153 aa).

Zn(2+)-binding residues include H118, H122, and H128.

It belongs to the endoribonuclease YbeY family. It depends on Zn(2+) as a cofactor.

The protein resides in the cytoplasm. In terms of biological role, single strand-specific metallo-endoribonuclease involved in late-stage 70S ribosome quality control and in maturation of the 3' terminus of the 16S rRNA. The protein is Endoribonuclease YbeY of Oenococcus oeni (strain ATCC BAA-331 / PSU-1).